Reading from the N-terminus, the 356-residue chain is Protein-arginine kinase (356 aa).

Residues 24-256 (IIISSRVRVA…RQILAQEQAA (233 aa)) form the Phosphagen kinase C-terminal domain. ATP contacts are provided by residues 27-31 (SSRVR), His-93, Arg-127, 178-182 (RASVM), and 209-214 (RGLYGE). Residues 339–344 (RDIFRA) carry the RDXXRA motif of the pArg binding pocket involved in allosteric regulation motif.

The protein belongs to the ATP:guanido phosphotransferase family.

It catalyses the reaction L-arginyl-[protein] + ATP = N(omega)-phospho-L-arginyl-[protein] + ADP + H(+). Appears to be allosterically activated by the binding of pArg-containing polypeptides to the pArg-binding pocket localized in the C-terminal domain of McsB. In terms of biological role, catalyzes the specific phosphorylation of arginine residues in proteins. The protein is Protein-arginine kinase of Pelotomaculum thermopropionicum (strain DSM 13744 / JCM 10971 / SI).